The following is a 102-amino-acid chain: Secreted RxLR effector protein 61 (102 aa).

The signal sequence occupies residues 1-22 (MAFQLRIVQHLLHITFLRLPLA). The RxLR-dEER signature appears at 51 to 60 (RRLRQLNEHR).

The protein belongs to the RxLR effector family.

Its subcellular location is the secreted. The protein localises to the host chloroplast envelope. It localises to the host cytoplasm. The protein resides in the host nucleus. Its function is as follows. Effector that partially suppresses the tobacco programmed cell death induced by cell death-inducing proteins. The protein is Secreted RxLR effector protein 61 of Plasmopara viticola (Downy mildew of grapevine).